Reading from the N-terminus, the 494-residue chain is Lysine--tRNA ligase (494 aa).

The Mg(2+) site is built by Glu399 and Glu406.

Belongs to the class-II aminoacyl-tRNA synthetase family. Mg(2+) is required as a cofactor.

The protein localises to the cytoplasm. It carries out the reaction tRNA(Lys) + L-lysine + ATP = L-lysyl-tRNA(Lys) + AMP + diphosphate. The polypeptide is Lysine--tRNA ligase (lysS) (Saccharolobus solfataricus (strain ATCC 35092 / DSM 1617 / JCM 11322 / P2) (Sulfolobus solfataricus)).